The sequence spans 220 residues: Iron-sulfur cluster repair protein YtfE (220 aa).

The protein belongs to the RIC family. YtfE subfamily. As to quaternary structure, homodimer.

It is found in the cytoplasm. Functionally, di-iron-containing protein involved in the repair of iron-sulfur clusters damaged by oxidative and nitrosative stress conditions. The polypeptide is Iron-sulfur cluster repair protein YtfE (Escherichia coli O6:K15:H31 (strain 536 / UPEC)).